Reading from the N-terminus, the 507-residue chain is ATP synthase subunit alpha, chloroplastic (507 aa).

170–177 (GDRQTGKT) serves as a coordination point for ATP.

This sequence belongs to the ATPase alpha/beta chains family. F-type ATPases have 2 components, CF(1) - the catalytic core - and CF(0) - the membrane proton channel. CF(1) has five subunits: alpha(3), beta(3), gamma(1), delta(1), epsilon(1). CF(0) has four main subunits: a, b, b' and c.

It localises to the plastid. The protein resides in the chloroplast thylakoid membrane. It carries out the reaction ATP + H2O + 4 H(+)(in) = ADP + phosphate + 5 H(+)(out). Functionally, produces ATP from ADP in the presence of a proton gradient across the membrane. The alpha chain is a regulatory subunit. This chain is ATP synthase subunit alpha, chloroplastic, found in Cycas taitungensis (Prince sago).